The following is a 340-amino-acid chain: 4-amino-5-hydroxymethyl-2-methylpyrimidine phosphate synthase THI12 (340 aa).

Lysine 62 bears the N6-(pyridoxal phosphate)lysine mark. Histidine 66 is a catalytic residue. A pyridoxal 5'-phosphate-binding site is contributed by 115–118; sequence GEFG. A CCCFC; essential for catalytic activity, may be the site of iron coordination motif is present at residues 195 to 199; sequence CCCFC.

It belongs to the NMT1/THI5 family. As to quaternary structure, homodimer. The cofactor is Fe cation.

It carries out the reaction N(6)-(pyridoxal phosphate)-L-lysyl-[4-amino-5-hydroxymethyl-2-methylpyrimidine phosphate synthase] + L-histidyl-[4-amino-5-hydroxymethyl-2-methylpyrimidine phosphate synthase] + 2 Fe(3+) + 4 H2O = L-lysyl-[4-amino-5-hydroxymethyl-2-methylpyrimidine phosphate synthase] + (2S)-2-amino-5-hydroxy-4-oxopentanoyl-[4-amino-5-hydroxymethyl-2-methylpyrimidine phosphate synthase] + 4-amino-2-methyl-5-(phosphooxymethyl)pyrimidine + 3-oxopropanoate + 2 Fe(2+) + 2 H(+). It participates in cofactor biosynthesis; thiamine diphosphate biosynthesis. In terms of biological role, responsible for the formation of the pyrimidine heterocycle in the thiamine biosynthesis pathway. Catalyzes the formation of hydroxymethylpyrimidine phosphate (HMP-P) from histidine and pyridoxal phosphate (PLP). The protein uses PLP and the active site histidine to form HMP-P, generating an inactive enzyme. The enzyme can only undergo a single turnover, which suggests it is a suicide enzyme. In Saccharomyces cerevisiae (strain ATCC 204508 / S288c) (Baker's yeast), this protein is 4-amino-5-hydroxymethyl-2-methylpyrimidine phosphate synthase THI12.